The sequence spans 83 residues: Gene 41 protein (83 aa).

This Mycobacterium phage L5 (Mycobacteriophage L5) protein is Gene 41 protein (41).